Consider the following 161-residue polypeptide: Cytochrome c-type biogenesis protein CcmE (161 aa).

Residues 1–8 (MNARRKKR) lie on the Cytoplasmic side of the membrane. The helical; Signal-anchor for type II membrane protein transmembrane segment at 9 to 29 (LALATALIGGVAAIASLLLYA) threads the bilayer. Over 30-161 (LNSNLNLFYT…DYNAEQKSGY (132 aa)) the chain is Periplasmic. Residues H131 and Y135 each contribute to the heme site.

This sequence belongs to the CcmE/CycJ family.

Its subcellular location is the cell inner membrane. Functionally, heme chaperone required for the biogenesis of c-type cytochromes. Transiently binds heme delivered by CcmC and transfers the heme to apo-cytochromes in a process facilitated by CcmF and CcmH. The sequence is that of Cytochrome c-type biogenesis protein CcmE from Shewanella woodyi (strain ATCC 51908 / MS32).